Consider the following 159-residue polypeptide: RxLR effector protein 24 (159 aa).

The N-terminal stretch at Met1 to Gly18 is a signal peptide. A RxLR-dEER motif is present at residues Arg58–Arg82. The interval Glu109–Thr159 is RABA-binding domain.

It belongs to the RxLR effector family. In terms of assembly, interacts with potato RABA GTPases including RABA1a, RABA2a and RABA4a.

The protein resides in the secreted. It is found in the host cell membrane. The protein localises to the host endomembrane system. Its function is as follows. Effector protein that contributes to pathogen virulence. Targets members of the RABA GTPases subfamily to inhibit vesicular secretion, leading to an accumulation of secretory proteins in the endoplasmic reticulum. This chain is RxLR effector protein 24, found in Phytophthora infestans (strain T30-4) (Potato late blight agent).